Consider the following 67-residue polypeptide: Neurotoxin Cex10 (67 aa).

Residues 1 to 65 (KDGYLVEVTG…TWPLPNKSCG (65 aa)) enclose the LCN-type CS-alpha/beta domain. 4 cysteine pairs are disulfide-bonded: C11–C64, C15–C40, C24–C45, and C28–C47. The residue at position 64 (C64) is a Cysteine amide. Positions 65–67 (GKK) are excised as a propeptide.

This sequence belongs to the long (4 C-C) scorpion toxin superfamily. Sodium channel inhibitor family. Beta subfamily. Expressed by the venom gland.

It localises to the secreted. Beta toxins bind voltage-independently at site-4 of sodium channels (Nav) and shift the voltage of activation toward more negative potentials thereby affecting sodium channel activation and promoting spontaneous and repetitive firing. In Centruroides exilicauda (Bark scorpion), this protein is Neurotoxin Cex10.